The primary structure comprises 239 residues: Probable transcriptional regulatory protein lmo0369 (239 aa).

The protein belongs to the TACO1 family. YeeN subfamily.

The protein resides in the cytoplasm. The polypeptide is Probable transcriptional regulatory protein lmo0369 (Listeria monocytogenes serovar 1/2a (strain ATCC BAA-679 / EGD-e)).